A 452-amino-acid polypeptide reads, in one-letter code: Pup--protein ligase (452 aa).

Glutamate 9 provides a ligand contact to Mg(2+). Arginine 53 is a binding site for ATP. Mg(2+) is bound at residue tyrosine 55. The Proton acceptor role is filled by aspartate 57. A Mg(2+)-binding site is contributed by glutamate 63. Residues threonine 66 and tryptophan 419 each coordinate ATP.

It belongs to the Pup ligase/Pup deamidase family. Pup-conjugating enzyme subfamily.

The catalysed reaction is ATP + [prokaryotic ubiquitin-like protein]-L-glutamate + [protein]-L-lysine = ADP + phosphate + N(6)-([prokaryotic ubiquitin-like protein]-gamma-L-glutamyl)-[protein]-L-lysine.. It functions in the pathway protein degradation; proteasomal Pup-dependent pathway. It participates in protein modification; protein pupylation. Catalyzes the covalent attachment of the prokaryotic ubiquitin-like protein modifier Pup to the proteasomal substrate proteins, thereby targeting them for proteasomal degradation. This tagging system is termed pupylation. The ligation reaction involves the side-chain carboxylate of the C-terminal glutamate of Pup and the side-chain amino group of a substrate lysine. This Nakamurella multipartita (strain ATCC 700099 / DSM 44233 / CIP 104796 / JCM 9543 / NBRC 105858 / Y-104) (Microsphaera multipartita) protein is Pup--protein ligase.